The following is a 510-amino-acid chain: 2,3-bisphosphoglycerate-independent phosphoglycerate mutase (510 aa).

The Mn(2+) site is built by aspartate 12 and serine 62. The active-site Phosphoserine intermediate is serine 62. Residues histidine 123, 153–154 (RD), arginine 185, arginine 191, 260–263 (RPDR), and lysine 333 contribute to the substrate site. Aspartate 400, histidine 404, aspartate 441, histidine 442, and histidine 460 together coordinate Mn(2+).

The protein belongs to the BPG-independent phosphoglycerate mutase family. In terms of assembly, monomer. The cofactor is Mn(2+).

The catalysed reaction is (2R)-2-phosphoglycerate = (2R)-3-phosphoglycerate. The protein operates within carbohydrate degradation; glycolysis; pyruvate from D-glyceraldehyde 3-phosphate: step 3/5. In terms of biological role, catalyzes the interconversion of 2-phosphoglycerate and 3-phosphoglycerate. This Clostridium acetobutylicum (strain ATCC 824 / DSM 792 / JCM 1419 / IAM 19013 / LMG 5710 / NBRC 13948 / NRRL B-527 / VKM B-1787 / 2291 / W) protein is 2,3-bisphosphoglycerate-independent phosphoglycerate mutase.